A 66-amino-acid polypeptide reads, in one-letter code: U1-theraphotoxin-Cg1d 2 (66 aa).

Residues 1 to 21 form the signal peptide; that stretch reads MKMSALFPIFGLPLLFCNSFA. Positions 22–29 are excised as a propeptide; it reads AELKATGR. 3 cysteine pairs are disulfide-bonded: cysteine 31/cysteine 46, cysteine 38/cysteine 51, and cysteine 45/cysteine 58. Proline 63 bears the Proline amide mark.

This sequence belongs to the neurotoxin 10 (Hwtx-1) family. 46 (Jztx-7/10/12) subfamily. In terms of tissue distribution, expressed by the venom gland.

It localises to the secreted. Probable ion channel inhibitor. The protein is U1-theraphotoxin-Cg1d 2 of Chilobrachys guangxiensis (Chinese earth tiger tarantula).